Reading from the N-terminus, the 800-residue chain is DNA topoisomerase 4 subunit A (800 aa).

One can recognise a Topo IIA-type catalytic domain in the interval 31-495; sequence LPDVRDGLKP…EIEEIKIDKE (465 aa). Y119 (O-(5'-phospho-DNA)-tyrosine intermediate) is an active-site residue.

The protein belongs to the type II topoisomerase GyrA/ParC subunit family. ParC type 2 subfamily. As to quaternary structure, heterotetramer composed of ParC and ParE.

It is found in the cell membrane. It catalyses the reaction ATP-dependent breakage, passage and rejoining of double-stranded DNA.. Its function is as follows. Topoisomerase IV is essential for chromosome segregation. It relaxes supercoiled DNA. Performs the decatenation events required during the replication of a circular DNA molecule. The polypeptide is DNA topoisomerase 4 subunit A (Staphylococcus aureus (strain MW2)).